Reading from the N-terminus, the 185-residue chain is dCTP deaminase (185 aa).

107-112 (KSTYAR) is a dCTP binding site. The active-site Proton donor/acceptor is the E133. DCTP-binding residues include Q152, Y166, and Q176.

This sequence belongs to the dCTP deaminase family. Homotrimer.

The catalysed reaction is dCTP + H2O + H(+) = dUTP + NH4(+). It participates in pyrimidine metabolism; dUMP biosynthesis; dUMP from dCTP (dUTP route): step 1/2. Functionally, catalyzes the deamination of dCTP to dUTP. The chain is dCTP deaminase from Nitratiruptor sp. (strain SB155-2).